A 727-amino-acid chain; its full sequence is Catalase-peroxidase (727 aa).

A disordered region spans residues 1–26 (MSDEKKCPVTGRTSSQVAGSGTSNKD). The segment covering 11–26 (GRTSSQVAGSGTSNKD) has biased composition (polar residues). A cross-link (tryptophyl-tyrosyl-methioninium (Trp-Tyr) (with M-245)) is located at residues 96–219 (WHSAGTYRIG…LAAVQMGLIY (124 aa)). Histidine 97 functions as the Proton acceptor in the catalytic mechanism. Residues 219–245 (YVNPEGPNGDPNAVASGKDVRETFARM) constitute a cross-link (tryptophyl-tyrosyl-methioninium (Tyr-Met) (with W-96)). Residue histidine 260 participates in heme b binding. The span at 346-362 (SDPEAKKAVPDAHDPSK) shows a compositional bias: basic and acidic residues. A disordered region spans residues 346–365 (SDPEAKKAVPDAHDPSKTHP).

The protein belongs to the peroxidase family. Peroxidase/catalase subfamily. As to quaternary structure, homodimer or homotetramer. Heme b is required as a cofactor. Post-translationally, formation of the three residue Trp-Tyr-Met cross-link is important for the catalase, but not the peroxidase activity of the enzyme.

The catalysed reaction is H2O2 + AH2 = A + 2 H2O. It catalyses the reaction 2 H2O2 = O2 + 2 H2O. In terms of biological role, bifunctional enzyme with both catalase and broad-spectrum peroxidase activity. The protein is Catalase-peroxidase of Maridesulfovibrio salexigens (strain ATCC 14822 / DSM 2638 / NCIMB 8403 / VKM B-1763) (Desulfovibrio salexigens).